A 418-amino-acid polypeptide reads, in one-letter code: uncharacterized protein (418 aa).

A disordered region spans residues 1–24; it reads MSGTAGFITVSPGPPTEAPGGFPR.

This sequence to A.pernix APE_1276 and S.solfataricus SSO2105.

This is an uncharacterized protein from Aeropyrum pernix (strain ATCC 700893 / DSM 11879 / JCM 9820 / NBRC 100138 / K1).